A 455-amino-acid polypeptide reads, in one-letter code: Glutamyl-tRNA reductase (455 aa).

Substrate is bound by residues 49-52 (TCNR), Ser109, 114-116 (EAQ), and Gln120. The active-site Nucleophile is the Cys50. 190-195 (GAGAMG) provides a ligand contact to NADP(+).

The protein belongs to the glutamyl-tRNA reductase family. In terms of assembly, homodimer.

It carries out the reaction (S)-4-amino-5-oxopentanoate + tRNA(Glu) + NADP(+) = L-glutamyl-tRNA(Glu) + NADPH + H(+). It participates in porphyrin-containing compound metabolism; protoporphyrin-IX biosynthesis; 5-aminolevulinate from L-glutamyl-tRNA(Glu): step 1/2. Catalyzes the NADPH-dependent reduction of glutamyl-tRNA(Glu) to glutamate 1-semialdehyde (GSA). The polypeptide is Glutamyl-tRNA reductase (Salinispora arenicola (strain CNS-205)).